We begin with the raw amino-acid sequence, 391 residues long: Probable methanogen homoaconitase large subunit (391 aa).

Residues Cys-275, Cys-333, and Cys-336 each coordinate [4Fe-4S] cluster.

This sequence belongs to the aconitase/IPM isomerase family. LeuC type 2 subfamily. In terms of assembly, heterotetramer of 2 HacA and 2 HacB proteins.

It carries out the reaction (2R)-homocitrate = (2R,3S)-homoisocitrate. It catalyses the reaction (2R)-homocitrate = cis-homoaconitate + H2O. The enzyme catalyses (2R,3S)-homoisocitrate = cis-homoaconitate + H2O. The catalysed reaction is cis-(homo)2aconitate + H2O = (2R,3S)-iso(homo)2citrate. It carries out the reaction cis-(homo)3aconitate + H2O = (2R,3S)-iso(homo)3citrate. Its pathway is organic acid metabolism; 2-oxosuberate biosynthesis. In terms of biological role, component of a hydro-lyase with broad substrate specificity for cis-unsaturated tricarboxylic acids. Catalyzes both the reversible dehydration of (R)-homocitrate ((R)-2-hydroxybutane-1,2,4-tricarboxylate) to produce cis-homoaconitate ((Z)-but-1-ene-1,2,4-tricarboxylate), and its hydration to homoisocitrate ((1R,2S)-1-hydroxybutane-1,2,4-tricarboxylate). Is also able to hydrate the analogous longer chain substrates cis-homo(2)-aconitate, cis-homo(3)-aconitate. These reactions are part of the biosynthesis pathway of coenzyme B. The sequence is that of Probable methanogen homoaconitase large subunit (hacA) from Methanosarcina mazei (strain ATCC BAA-159 / DSM 3647 / Goe1 / Go1 / JCM 11833 / OCM 88) (Methanosarcina frisia).